We begin with the raw amino-acid sequence, 85 residues long: Small ribosomal subunit protein uS17 (85 aa).

Belongs to the universal ribosomal protein uS17 family. In terms of assembly, part of the 30S ribosomal subunit.

One of the primary rRNA binding proteins, it binds specifically to the 5'-end of 16S ribosomal RNA. The polypeptide is Small ribosomal subunit protein uS17 (Desulfosudis oleivorans (strain DSM 6200 / JCM 39069 / Hxd3) (Desulfococcus oleovorans)).